The sequence spans 424 residues: Zinc metalloproteinase-disintegrin-like brevilysin H2b (424 aa).

Gln1 bears the Pyrrolidone carboxylic acid mark. The region spanning 9–207 is the Peptidase M12B domain; the sequence is RYVKLAIVAD…YKPQCILNEP (199 aa). The N-linked (GlcNAc...) asparagine glycan is linked to Asn69. Ca(2+) is bound at residue Asp96. Cystine bridges form between Cys120-Cys202, Cys164-Cys186, and Cys166-Cys169. His145 contacts Zn(2+). Residue Glu146 is part of the active site. Positions 149 and 155 each coordinate Zn(2+). N-linked (GlcNAc...) asparagine glycosylation is present at Asn185. 8 residues coordinate Ca(2+): Cys202, Asn205, Val217, Asn220, Leu222, Glu224, Glu227, and Asp230. The Disintegrin domain occupies 215–301; it reads PPVCGNELLE…DCPTDDLQRN (87 aa). 14 cysteine pairs are disulfide-bonded: Cys218–Cys247, Cys229–Cys242, Cys231–Cys237, Cys241–Cys264, Cys255–Cys261, Cys260–Cys286, Cys273–Cys293, Cys280–Cys312, Cys305–Cys317, Cys324–Cys374, Cys339–Cys385, Cys352–Cys362, Cys369–Cys411, and Cys405–Cys417. The D/ECD-tripeptide motif lies at 279 to 281; that stretch reads DCD. Asp281, Glu284, and Asp296 together coordinate Ca(2+).

Belongs to the venom metalloproteinase (M12B) family. P-III subfamily. P-IIIa sub-subfamily. In terms of assembly, monomer. Zn(2+) serves as cofactor. Glycosylated. As to expression, expressed by the venom gland.

Its subcellular location is the secreted. Its proteolytic activity is inhibited by EDTA, TPEN, 1,10-phenanthroline, and some thiol compounds, but is enhanced by alkaline earth metal ions (Mg2+, Ca2+, Sr2+, and Ba2+). Its activity is not modulated by urea (4 M). In terms of biological role, non-hemorrhagic metalloproteinase that degrades fibrinogen. The alpha chain (FGA) is rapidly degraded, the beta chain (FGB) is degraded very slowly, while the gamma chain is left intact. Shows a prefential cleavage at X-Leu bonds. Cleaves insulin B chain at '29-His-|-Leu-30', '33-Ser-|-His-34', '38-Ala-|-Leu-39' and '40-Tyr-|-Leu-41' bonds. In Gloydius brevicauda (Korean slamosa snake), this protein is Zinc metalloproteinase-disintegrin-like brevilysin H2b.